A 303-amino-acid chain; its full sequence is Peptidyl-prolyl isomerase CWC27 (303 aa).

The PPIase cyclophilin-type domain occupies 7-153 (ASGKCVLYTT…AEVTIPYFDG (147 aa)). Disordered stretches follow at residues 155–195 (SGQK…PPLD) and 208–274 (ERLT…TDLA).

Belongs to the cyclophilin-type PPIase family. CWC27 subfamily. Associated with the spliceosome.

It is found in the cytoplasm. The protein resides in the nucleus. The catalysed reaction is [protein]-peptidylproline (omega=180) = [protein]-peptidylproline (omega=0). PPIases accelerate the folding of proteins. It catalyzes the cis-trans isomerization of proline imidic peptide bonds in oligopeptides. Involved in pre-mRNA splicing. This Eremothecium gossypii (strain ATCC 10895 / CBS 109.51 / FGSC 9923 / NRRL Y-1056) (Yeast) protein is Peptidyl-prolyl isomerase CWC27 (CWC27).